A 122-amino-acid chain; its full sequence is Small ribosomal subunit protein uS13 (122 aa).

The interval 93-122 (RRGLPVRGQRTKTNARTRKGPKKTIAGKKK) is disordered.

This sequence belongs to the universal ribosomal protein uS13 family. In terms of assembly, part of the 30S ribosomal subunit. Forms a loose heterodimer with protein S19. Forms two bridges to the 50S subunit in the 70S ribosome.

In terms of biological role, located at the top of the head of the 30S subunit, it contacts several helices of the 16S rRNA. In the 70S ribosome it contacts the 23S rRNA (bridge B1a) and protein L5 of the 50S subunit (bridge B1b), connecting the 2 subunits; these bridges are implicated in subunit movement. Contacts the tRNAs in the A and P-sites. In Corynebacterium jeikeium (strain K411), this protein is Small ribosomal subunit protein uS13.